The sequence spans 376 residues: Endoplasmic reticulum-Golgi intermediate compartment protein 2 (376 aa).

The Cytoplasmic portion of the chain corresponds to methionine 1–glycine 33. The chain crosses the membrane as a helical span at residues glycine 34–valine 54. The Lumenal portion of the chain corresponds to tyrosine 55–cysteine 318. The chain crosses the membrane as a helical span at residues glycine 319 to valine 339. Topologically, residues aspartate 340–glutamine 376 are cytoplasmic.

The protein belongs to the ERGIC family.

It is found in the endoplasmic reticulum-Golgi intermediate compartment membrane. It localises to the golgi apparatus. The protein localises to the cis-Golgi network membrane. The protein resides in the endoplasmic reticulum membrane. Possible role in transport between endoplasmic reticulum and Golgi. The protein is Endoplasmic reticulum-Golgi intermediate compartment protein 2 (ergic2) of Danio rerio (Zebrafish).